The sequence spans 431 residues: Serine--tRNA ligase (431 aa).

238-240 contacts L-serine; that stretch reads TAE. Residue 269–271 participates in ATP binding; sequence RSE. Glutamate 292 provides a ligand contact to L-serine. 356-359 contacts ATP; it reads EISS. Serine 392 lines the L-serine pocket.

The protein belongs to the class-II aminoacyl-tRNA synthetase family. Type-1 seryl-tRNA synthetase subfamily. In terms of assembly, homodimer. The tRNA molecule binds across the dimer.

It is found in the cytoplasm. The catalysed reaction is tRNA(Ser) + L-serine + ATP = L-seryl-tRNA(Ser) + AMP + diphosphate + H(+). It carries out the reaction tRNA(Sec) + L-serine + ATP = L-seryl-tRNA(Sec) + AMP + diphosphate + H(+). It participates in aminoacyl-tRNA biosynthesis; selenocysteinyl-tRNA(Sec) biosynthesis; L-seryl-tRNA(Sec) from L-serine and tRNA(Sec): step 1/1. Functionally, catalyzes the attachment of serine to tRNA(Ser). Is also able to aminoacylate tRNA(Sec) with serine, to form the misacylated tRNA L-seryl-tRNA(Sec), which will be further converted into selenocysteinyl-tRNA(Sec). This Pectobacterium atrosepticum (strain SCRI 1043 / ATCC BAA-672) (Erwinia carotovora subsp. atroseptica) protein is Serine--tRNA ligase.